An 804-amino-acid chain; its full sequence is MGDTMVEPVPVKLSDQSLVLRGNGGSALCVITEGVGEASLVIDPDVAQKACQEVLEKVKMIHGSSVESLDKVDGGDAGDGGSLANGDTEPKLTNTGHTSTSSRINEEESPLDINSVKNARRRQKNNSAKQSWLLRLFECKLFDVSMAISYLYNSKEPGVQAYIGNRLFCFRYEDVDFYLPQLLNMYIHMDEDVGDAIKPYVVHRCRQSINFSLQCAWLLGAYSSDMHISTQRHSRGTKLRKLILSDELKPAHKKREIPPLSLAPDTGLSPSKRTHQRSKSDATVSISLSSNLKRTSSNPKVENDDEPVRLAPEREFIKSLMGIGKRLATLPTKEQKTQRLISELSLLNHKLPARVWLPTAGFDHHVVRVPHTQAVVLNSKDKAPYLIYVEVLECENFETSLVPVRIPENRIRSTRSVENLPECGITHEQRASSFTTVPNYDNDDEAWSVDDIGELQVELPELHTNSCDNISQFSVDSITSQESKDPVFIAAGDIRRRLSEQLAHTPTTFRRDPEDPSAVALKEPWEEKVRRIREGSPYGHFPNWRLLSVIVKCGDDLRQELLASQVLKQLQSIWESERVPLWIRPYKILVISGDSGMIEPVVNAVSIHQVKKQSQLSLLHYFLQEHGSCTTEAFLTAQRNFVQSCAAYCLVCYLLQVKDRHNGNILLDAEGHIIHIDFGFILSSSPRNLGFETSAFKLTAEFVDVMGGLNGDMFNYYKMLMLQGLIAARKHMDKVVQVVEIMQQGSQLPCFHGSSTIRNLKERFHMNMTEEQLQILVEQMVDGSMRSITTKLYDGFQYLTNGIM.

The 191-residue stretch at 55–245 folds into the PIK helical domain; the sequence is LEKVKMIHGS…GTKLRKLILS (191 aa). 2 disordered regions span residues 69 to 122 and 251 to 309; these read LDKV…ARRR and AHKK…EPVR. Polar residues-rich tracts occupy residues 91 to 103 and 281 to 300; these read KLTNTGHTSTSSR and DATVSISLSSNLKRTSSNPK. Residues 523–789 enclose the PI3K/PI4K catalytic domain; the sequence is EPWEEKVRRI…MVDGSMRSIT (267 aa). Residues 529 to 535 are G-loop; sequence VRRIREG. The interval 656-664 is catalytic loop; the sequence is QVKDRHNGN. The interval 675–699 is activation loop; the sequence is HIDFGFILSSSPRNLGFETSAFKLT.

It belongs to the PI3/PI4-kinase family. Type III PI4K subfamily. Mg(2+) is required as a cofactor. The cofactor is Mn(2+).

Its subcellular location is the endomembrane system. The protein localises to the mitochondrion outer membrane. The protein resides in the rough endoplasmic reticulum membrane. The catalysed reaction is a 1,2-diacyl-sn-glycero-3-phospho-(1D-myo-inositol) + ATP = a 1,2-diacyl-sn-glycero-3-phospho-(1D-myo-inositol 4-phosphate) + ADP + H(+). In terms of biological role, phosphorylates phosphatidylinositol (PI) in the first committed step in the production of the second messenger inositol-1,4,5,-trisphosphate (PIP). May play an important role in the inner ear development. In Xenopus laevis (African clawed frog), this protein is Phosphatidylinositol 4-kinase beta (pi4kb).